A 334-amino-acid polypeptide reads, in one-letter code: Glutamyl-tRNA reductase (334 aa).

Substrate is bound by residues 49-52 (TCNR), Ser-107, 112-114 (EDQ), and Gln-118. Cys-50 serves as the catalytic Nucleophile. 186-191 (GNGEMG) contacts NADP(+).

The protein belongs to the glutamyl-tRNA reductase family. As to quaternary structure, homodimer.

The enzyme catalyses (S)-4-amino-5-oxopentanoate + tRNA(Glu) + NADP(+) = L-glutamyl-tRNA(Glu) + NADPH + H(+). It participates in porphyrin-containing compound metabolism; protoporphyrin-IX biosynthesis; 5-aminolevulinate from L-glutamyl-tRNA(Glu): step 1/2. Catalyzes the NADPH-dependent reduction of glutamyl-tRNA(Glu) to glutamate 1-semialdehyde (GSA). In Alkaliphilus oremlandii (strain OhILAs) (Clostridium oremlandii (strain OhILAs)), this protein is Glutamyl-tRNA reductase.